The primary structure comprises 73 residues: MTLTKSAVLILVLLLAFDNFADVQPGLITMGGGRLSNLLSKRVSIWFCASRTCSTPADCNPCTCESGVCVDWL.

Positions 1 to 23 are cleaved as a signal peptide; the sequence is MTLTKSAVLILVLLLAFDNFADV. Positions 24–40 are excised as a propeptide; it reads QPGLITMGGGRLSNLLS. 3 cysteine pairs are disulfide-bonded: cysteine 48–cysteine 62, cysteine 53–cysteine 64, and cysteine 59–cysteine 69.

This sequence belongs to the conotoxin P superfamily. In terms of tissue distribution, expressed by the venom duct.

It is found in the secreted. Functionally, probable neurotoxin that inhibits ion channels. This chain is Conotoxin Lt9a, found in Conus litteratus (Lettered cone).